Reading from the N-terminus, the 128-residue chain is Small ribosomal subunit protein uS11 (128 aa).

It belongs to the universal ribosomal protein uS11 family. Part of the 30S ribosomal subunit. Interacts with proteins S7 and S18. Binds to IF-3.

Its function is as follows. Located on the platform of the 30S subunit, it bridges several disparate RNA helices of the 16S rRNA. Forms part of the Shine-Dalgarno cleft in the 70S ribosome. The sequence is that of Small ribosomal subunit protein uS11 from Desulfatibacillum aliphaticivorans.